Consider the following 329-residue polypeptide: MQHLNELIEKAKLAIESIQDRSLTALDEIRVEYFGKKGHFTQLMQELRNVSAEERPAMGAKINEAKQAALEFLNAKKTEWEQAELNAKLEKERVDVSLPGRKVETGGLHPVTMTINRVTKFFSELGFSVENGPEIESDYYNFDALNIPKHHPARADHDTFWFNPELLLRTQTSGVQIRTMEKMQPPIRIMAPGRVYRNDYDQTHTPMFHQIELLYVDKKANFTELKGLLHDFLRAFFEEDLQVRFRPSYFPFTEPSAEVDVMGKNGKWLEVLGCGMVHPNVLRNVGIDPNEYSGFAVGMGVERLTMLRYNVTDLRSFFENDLRFLKQFK.

Glutamate 254 is a Mg(2+) binding site.

The protein belongs to the class-II aminoacyl-tRNA synthetase family. Phe-tRNA synthetase alpha subunit type 1 subfamily. As to quaternary structure, tetramer of two alpha and two beta subunits. The cofactor is Mg(2+).

The protein localises to the cytoplasm. The catalysed reaction is tRNA(Phe) + L-phenylalanine + ATP = L-phenylalanyl-tRNA(Phe) + AMP + diphosphate + H(+). This is Phenylalanine--tRNA ligase alpha subunit from Haemophilus influenzae (strain PittEE).